The sequence spans 350 residues: Biotin synthase (350 aa).

One can recognise a Radical SAM core domain in the interval 38-256 (NYVQVSTLLS…IAVARIMMPE (219 aa)). 3 residues coordinate [4Fe-4S] cluster: Cys53, Cys57, and Cys60. Cys97, Cys128, Cys188, and Arg260 together coordinate [2Fe-2S] cluster.

It belongs to the radical SAM superfamily. Biotin synthase family. Homodimer. The cofactor is [4Fe-4S] cluster. [2Fe-2S] cluster is required as a cofactor.

The enzyme catalyses (4R,5S)-dethiobiotin + (sulfur carrier)-SH + 2 reduced [2Fe-2S]-[ferredoxin] + 2 S-adenosyl-L-methionine = (sulfur carrier)-H + biotin + 2 5'-deoxyadenosine + 2 L-methionine + 2 oxidized [2Fe-2S]-[ferredoxin]. It participates in cofactor biosynthesis; biotin biosynthesis; biotin from 7,8-diaminononanoate: step 2/2. Its function is as follows. Catalyzes the conversion of dethiobiotin (DTB) to biotin by the insertion of a sulfur atom into dethiobiotin via a radical-based mechanism. This Aliivibrio salmonicida (strain LFI1238) (Vibrio salmonicida (strain LFI1238)) protein is Biotin synthase.